Consider the following 369-residue polypeptide: Serpentine receptor class epsilon-45 (369 aa).

Helical transmembrane passes span 1–21, 39–59, 67–87, 127–147, 169–191, 195–217, 258–278, and 291–311; these read MIFL…IFIL, FVLT…AIHI, TVLL…NILI, FFLG…TLLV, GLFF…LFFF, HFAV…FTYV, VIHA…FMYL, and IFES…LGSV.

Belongs to the nematode receptor-like protein sre family.

The protein localises to the membrane. This Caenorhabditis elegans protein is Serpentine receptor class epsilon-45 (sre-45).